Here is a 1680-residue protein sequence, read N- to C-terminus: RAF-like serine/threonine-protein kinase PRAF (1680 aa).

The disordered stretch occupies residues 86-163 (FSPSDPHNSV…TPSDDGKDFP (78 aa)). Positions 166 to 267 (RVKFMCSFGG…SRLRVFLFPA (102 aa)) constitute a PB1 domain. Disordered regions lie at residues 363-388 (LTGNLSNRSNAPSAPSSAPSSPPLLA), 417-516 (PQYT…DSQQ), 556-580 (PDMLQSSGAQPAVSGQQQQGYQPQQ), 594-613 (GANHEGAYRQGDQQQQSQQF), 641-672 (QSTSYHGSAPSSPRPGFRELPSRHLPGGPQLQ), 700-725 (RSFRLSSSPPRYRDHHPHSEERLHRQ), and 1186-1226 (LPNA…LGGQ). Over residues 366 to 388 (NLSNRSNAPSAPSSAPSSPPLLA) the composition is skewed to low complexity. Residues 446-482 (HEMHYRSTDSRRGPESPPKKFHDALHQDHPITVEQRR) are compositionally biased toward basic and acidic residues. 2 stretches are compositionally biased toward low complexity: residues 560–580 (QSSGAQPAVSGQQQQGYQPQQ) and 603–613 (QGDQQQQSQQF). Polar residues predominate over residues 641-651 (QSTSYHGSAPS). Over residues 1204 to 1217 (SRSSSSSLSELSKS) the composition is skewed to low complexity. At Ser1248 the chain carries Phosphoserine. The segment covering 1339 to 1354 (ASTVDKENQEEVRTGL) has biased composition (basic and acidic residues). The disordered stretch occupies residues 1339–1372 (ASTVDKENQEEVRTGLDEPADEDKANSTGLGSDP). Position 1365 is a phosphoserine (Ser1365). The 267-residue stretch at 1389 to 1655 (LEELRELGSG…SDIAKELRTM (267 aa)) folds into the Protein kinase domain. Residues 1395–1403 (LGSGTFGTV) and Lys1416 each bind ATP. The active-site Proton acceptor is the Asp1518. A disordered region spans residues 1661–1680 (PKTQAQTQGQSHPHPQMQIV).

Belongs to the protein kinase superfamily. Ser/Thr protein kinase family. Hyperphosphorylated in response to auxin. Its phosphorylation state is also rapidly stimulated by photosynthetic activity (e.g. in response to blue light and red light irradiation); dephosphorylated in the darkness.

Its subcellular location is the cytoplasm. It carries out the reaction L-seryl-[protein] + ATP = O-phospho-L-seryl-[protein] + ADP + H(+). The catalysed reaction is L-threonyl-[protein] + ATP = O-phospho-L-threonyl-[protein] + ADP + H(+). With respect to regulation, activated by auxin via rapid phosphorylation. Regulated by photosynthesis-activity-dependent changes in its phosphorylation status. Functionally, RAF-like protein kinase acting as a central mediator of a fast response pathway to auxin involving proteins phosphorylation, and leading to rapid cellular responses including membrane depolarization and cytoplasmic streaming. Required for general growth and developmental process. Photosynthesis signaling kinase involved in the regulation of the sucrose metabolism involving PGM1. Necessary for optimal chloroplast electron transport rate (ETR). This chain is RAF-like serine/threonine-protein kinase PRAF, found in Marchantia polymorpha (Common liverwort).